A 273-amino-acid chain; its full sequence is Putative phosphoenolpyruvate synthase regulatory protein (273 aa).

Residue 153–160 coordinates ADP; that stretch reads AVSRAGKT.

This sequence belongs to the pyruvate, phosphate/water dikinase regulatory protein family. PSRP subfamily.

It catalyses the reaction [pyruvate, water dikinase] + ADP = [pyruvate, water dikinase]-phosphate + AMP + H(+). It carries out the reaction [pyruvate, water dikinase]-phosphate + phosphate + H(+) = [pyruvate, water dikinase] + diphosphate. In terms of biological role, bifunctional serine/threonine kinase and phosphorylase involved in the regulation of the phosphoenolpyruvate synthase (PEPS) by catalyzing its phosphorylation/dephosphorylation. The polypeptide is Putative phosphoenolpyruvate synthase regulatory protein (Stenotrophomonas maltophilia (strain K279a)).